The following is a 361-amino-acid chain: Queuine tRNA-ribosyltransferase (361 aa).

Aspartate 92 (proton acceptor) is an active-site residue. Substrate-binding positions include 92–96, aspartate 146, glutamine 189, and glycine 216; that span reads DSGGF. The interval 247–253 is RNA binding; sequence GVGKPAD. The active-site Nucleophile is aspartate 266. Residues 271-275 form an RNA binding; important for wobble base 34 recognition region; it reads TRSGR. The Zn(2+) site is built by cysteine 304, cysteine 306, cysteine 309, and histidine 335.

The protein belongs to the queuine tRNA-ribosyltransferase family. In terms of assembly, homodimer. Within each dimer, one monomer is responsible for RNA recognition and catalysis, while the other monomer binds to the replacement base PreQ1. Requires Zn(2+) as cofactor.

The catalysed reaction is 7-aminomethyl-7-carbaguanine + guanosine(34) in tRNA = 7-aminomethyl-7-carbaguanosine(34) in tRNA + guanine. It functions in the pathway tRNA modification; tRNA-queuosine biosynthesis. Functionally, catalyzes the base-exchange of a guanine (G) residue with the queuine precursor 7-aminomethyl-7-deazaguanine (PreQ1) at position 34 (anticodon wobble position) in tRNAs with GU(N) anticodons (tRNA-Asp, -Asn, -His and -Tyr). Catalysis occurs through a double-displacement mechanism. The nucleophile active site attacks the C1' of nucleotide 34 to detach the guanine base from the RNA, forming a covalent enzyme-RNA intermediate. The proton acceptor active site deprotonates the incoming PreQ1, allowing a nucleophilic attack on the C1' of the ribose to form the product. After dissociation, two additional enzymatic reactions on the tRNA convert PreQ1 to queuine (Q), resulting in the hypermodified nucleoside queuosine (7-(((4,5-cis-dihydroxy-2-cyclopenten-1-yl)amino)methyl)-7-deazaguanosine). In Rickettsia felis (strain ATCC VR-1525 / URRWXCal2) (Rickettsia azadi), this protein is Queuine tRNA-ribosyltransferase.